Reading from the N-terminus, the 87-residue chain is Large ribosomal subunit protein bL31B (87 aa).

It belongs to the bacterial ribosomal protein bL31 family. Type B subfamily. In terms of assembly, part of the 50S ribosomal subunit.

This is Large ribosomal subunit protein bL31B from Pseudomonas paraeruginosa (strain DSM 24068 / PA7) (Pseudomonas aeruginosa (strain PA7)).